The sequence spans 362 residues: MLQNQTRKLRVLVVDDSSFMRMVIRSVLEKDPAIEVVGIAVDGMEGVEKALALKPDLITMDIEMPRLDGISALKQVMAKCPTRVLMVSTLTCEGAKATFDALDAGAIDYIPKNVTDSADAQRVFREELLRKVKGAASSIFGRPMTTSAPRAIIAPPRQVQPAPRPSQALAGKFHYVGIGASTGGPVALQEVLGRIPGNYPHGIVVAIHMPKAFTGPYAERLNSKCSLQIKEANDGDIIQPGVVLVAPGGRHMALARQGNSIVVRTLSTAECPQYIYIPSVDHMMTTLADATNGSALGVILTGMGSDGFKGMKHLKSKGGITIVQDEATSTIYGMPRACIEGGVADTVLPLTQIGSEIARLGG.

The Response regulatory domain occupies 10–127; that stretch reads RVLVVDDSSF…ADAQRVFREE (118 aa). At D61 the chain carries 4-aspartylphosphate. The CheB-type methylesterase domain occupies 163 to 357; the sequence is PRPSQALAGK…LPLTQIGSEI (195 aa). Residues S181, H208, and D306 contribute to the active site.

This sequence belongs to the CheB family. Post-translationally, phosphorylated by CheA. Phosphorylation of the N-terminal regulatory domain activates the methylesterase activity.

The protein localises to the cytoplasm. The catalysed reaction is [protein]-L-glutamate 5-O-methyl ester + H2O = L-glutamyl-[protein] + methanol + H(+). It catalyses the reaction L-glutaminyl-[protein] + H2O = L-glutamyl-[protein] + NH4(+). Involved in chemotaxis. Part of a chemotaxis signal transduction system that modulates chemotaxis in response to various stimuli. Catalyzes the demethylation of specific methylglutamate residues introduced into the chemoreceptors (methyl-accepting chemotaxis proteins or MCP) by CheR. Also mediates the irreversible deamidation of specific glutamine residues to glutamic acid. The chain is Protein-glutamate methylesterase/protein-glutamine glutaminase 1 from Geobacter sulfurreducens (strain ATCC 51573 / DSM 12127 / PCA).